Here is an 820-residue protein sequence, read N- to C-terminus: LPS-assembly protein LptD (820 aa).

The tract at residues 1–27 is disordered; it reads MDLSSLPDPLRPTHSRLPARRRDRAEP. Over residues 13 to 22 the composition is skewed to basic residues; that stretch reads THSRLPARRR.

Belongs to the LptD family. In terms of assembly, component of the lipopolysaccharide transport and assembly complex. Interacts with LptE and LptA.

Its function is as follows. Together with LptE, is involved in the assembly of lipopolysaccharide (LPS) at the surface of the outer membrane. In Paracidovorax citrulli (strain AAC00-1) (Acidovorax citrulli), this protein is LPS-assembly protein LptD.